The primary structure comprises 424 residues: MKVRILNEPINVELSRIAADKSISHRCAIFSLLSDKPSHVRNYLKAGDTLNTLDIVRTLGAQIQERGEEVIITPPEKILEPDVVLECGNSGTSMRLFMGLLAAQDGFFVLSGDKYLNRRPMARVAKPLVAVGAKIDGANEANTAPLCIRGKKLERFKYDSPVASAQVKSALLLAALYSNGCEFSEPELSRDHTERMLKGMGAKIKTQGASIALEPMSTPLAPLDIDVPNDPSSAFFFAVAACIIPNSHIVLKNVLLNETRIEAYKILQKMGADIKFKEISGKYESIGDIEIRYAALNAVEVSENISWLIDEAPALAIAFANAKGTSVLKNAKELRVKECDRIAVTVAGLKKCGIKARELEDGFEVSGSDASCAIIDSHGDHRIAMSFAVLGLKCGMIIEKSEFIATSFPNFVSILRKIGASVED.

3-phosphoshikimate contacts are provided by Lys-21, Ser-22, and Arg-26. A phosphoenolpyruvate-binding site is contributed by Lys-21. Phosphoenolpyruvate-binding residues include Gly-91 and Arg-119. Ser-164, Gln-166, Asp-310, and Lys-337 together coordinate 3-phosphoshikimate. Gln-166 is a binding site for phosphoenolpyruvate. Asp-310 serves as the catalytic Proton acceptor. The phosphoenolpyruvate site is built by Arg-341 and Arg-382.

It belongs to the EPSP synthase family. As to quaternary structure, monomer.

The protein resides in the cytoplasm. The catalysed reaction is 3-phosphoshikimate + phosphoenolpyruvate = 5-O-(1-carboxyvinyl)-3-phosphoshikimate + phosphate. It functions in the pathway metabolic intermediate biosynthesis; chorismate biosynthesis; chorismate from D-erythrose 4-phosphate and phosphoenolpyruvate: step 6/7. Catalyzes the transfer of the enolpyruvyl moiety of phosphoenolpyruvate (PEP) to the 5-hydroxyl of shikimate-3-phosphate (S3P) to produce enolpyruvyl shikimate-3-phosphate and inorganic phosphate. The protein is 3-phosphoshikimate 1-carboxyvinyltransferase of Campylobacter curvus (strain 525.92).